A 114-amino-acid polypeptide reads, in one-letter code: Large ribosomal subunit protein bL19 (114 aa).

Belongs to the bacterial ribosomal protein bL19 family.

In terms of biological role, this protein is located at the 30S-50S ribosomal subunit interface and may play a role in the structure and function of the aminoacyl-tRNA binding site. The sequence is that of Large ribosomal subunit protein bL19 from Lactococcus lactis subsp. cremoris (strain MG1363).